Here is a 149-residue protein sequence, read N- to C-terminus: Calmodulin (149 aa).

Ala2 is modified (N-acetylalanine). 4 EF-hand domains span residues 8 to 43 (EQIA…LGQN), 44 to 79 (PTEA…KMKD), 81 to 116 (DTEE…LGEK), and 117 to 149 (LTDE…MMAK). Residues Asp21, Asp23, Asp25, Thr27, Glu32, Asp57, Asp59, Asn61, Thr63, Glu68, Asp94, Asp96, Asn98, and Glu105 each coordinate Ca(2+). Lys116 is modified (N6,N6,N6-trimethyllysine). Residues Asp130, Asp132, Asp134, His136, and Glu141 each contribute to the Ca(2+) site.

It belongs to the calmodulin family.

In terms of biological role, calmodulin mediates the control of a large number of enzymes, ion channels and other proteins by Ca(2+). Among the enzymes to be stimulated by the calmodulin-Ca(2+) complex are a number of protein kinases and phosphatases. This chain is Calmodulin, found in Tetrahymena pyriformis.